Here is an 849-residue protein sequence, read N- to C-terminus: MGPLRQFVQNFRLLSGFGTDHRVFLDVVKACASVSDLTSGRALHGCVFKLGHIACSEVSKSVLNMYAKCRRMDDCQKMFRQMDSLDPVVWNIVLTGLSVSCGRETMRFFKAMHFADEPKPSSVTFAIVLPLCVRLGDSYNGKSMHSYIIKAGLEKDTLVGNALVSMYAKFGFIFPDAYTAFDGIADKDVVSWNAIIAGFSENNMMADAFRSFCLMLKEPTEPNYATIANVLPVCASMDKNIACRSGRQIHSYVVQRSWLQTHVFVCNSLVSFYLRVGRIEEAASLFTRMGSKDLVSWNVVIAGYASNCEWFKAFQLFHNLVHKGDVSPDSVTIISILPVCAQLTDLASGKEIHSYILRHSYLLEDTSVGNALISFYARFGDTSAAYWAFSLMSTKDIISWNAILDAFADSPKQFQFLNLLHHLLNEAITLDSVTILSLLKFCINVQGIGKVKEVHGYSVKAGLLHDEEEPKLGNALLDAYAKCGNVEYAHKIFLGLSERRTLVSYNSLLSGYVNSGSHDDAQMLFTEMSTTDLTTWSLMVRIYAESCCPNEAIGVFREIQARGMRPNTVTIMNLLPVCAQLASLHLVRQCHGYIIRGGLGDIRLKGTLLDVYAKCGSLKHAYSVFQSDARRDLVMFTAMVAGYAVHGRGKEALMIYSHMTESNIKPDHVFITTMLTACCHAGLIQDGLQIYDSIRTVHGMKPTMEQYACAVDLIARGGRLDDAYSFVTQMPVEPNANIWGTLLRACTTYNRMDLGHSVANHLLQAESDDTGNHVLISNMYAADAKWEGVMELRNLMKKKEMKKPAGCSWLEVDGQRNVFVSGDCSHPRRDSIFDLVNALYLQMKEPVVF.

PPR repeat units lie at residues 20 to 54, 55 to 89, 121 to 155, 156 to 187, 188 to 222, 223 to 260, 262 to 296, 297 to 327, 329 to 363, 365 to 399, 400 to 430, 431 to 465, 469 to 499, 501 to 531, 532 to 566, 567 to 597, 601 to 631, 632 to 666, 667 to 702, and 703 to 733; these read DHRV…GHIA, CSEV…DPVV, SSVT…GLEK, DTLV…IADK, DVVS…PTEP, NYAT…SWLQ, HVFV…DLVS, WNVV…GDVS, DSVT…SYLL, DTSV…DIIS, WNAI…AITL, DSVT…GLLH, EPKL…LSER, TLVS…MSTT, DLTT…GMRP, NTVT…IIRG, DIRL…DARR, DLVM…NIKP, DHVF…GMKP, and TMEQ…MPVE. Residues 738–813 form a type E motif region; it reads IWGTLLRACT…PAGCSWLEVD (76 aa). The segment at 814-844 is type E(+) motif; that stretch reads GQRNVFVSGDCSHPRRDSIFDLVNALYLQMK.

This sequence belongs to the PPR family. PCMP-E subfamily.

This Arabidopsis thaliana (Mouse-ear cress) protein is Putative pentatricopeptide repeat-containing protein At5g08490 (PCMP-E32).